Here is a 190-residue protein sequence, read N- to C-terminus: Vascular endothelial growth factor A (190 aa).

An N-terminal signal peptide occupies residues 1 to 26 (MNFLLSWVHWSLALLLYLHHAKWSQA). Intrachain disulfides connect cysteine 51–cysteine 93, cysteine 82–cysteine 127, and cysteine 86–cysteine 129. The N-linked (GlcNAc...) asparagine glycan is linked to asparagine 100.

Belongs to the PDGF/VEGF growth factor family. In terms of assembly, homodimer; disulfide-linked. Also found as heterodimer with PGF. Interacts with NRP1. Interacts with BSG. Interacts with CD82; this interaction inhibits VEGFA-mediated signaling pathway.

It is found in the secreted. Growth factor active in angiogenesis, vasculogenesis and endothelial cell growth. Induces endothelial cell proliferation, promotes cell migration, inhibits apoptosis and induces permeabilization of blood vessels. Binds to the FLT1/VEGFR1 and KDR/VEGFR2 receptors, heparan sulfate and heparin. Binding to NRP1 receptor initiates a signaling pathway needed for motor neuron axon guidance and cell body migration, including for the caudal migration of facial motor neurons from rhombomere 4 to rhombomere 6 during embryonic development. Also binds the DEAR/FBXW7-AS1 receptor. The chain is Vascular endothelial growth factor A (VEGFA) from Sus scrofa (Pig).